We begin with the raw amino-acid sequence, 413 residues long: Metacaspase-1A (413 aa).

The disordered stretch occupies residues Met1 to Gly104. The segment covering Ser36–His47 has biased composition (pro residues). Positions Gly49–Gly58 are enriched in low complexity. Residues Gly75–His85 are compositionally biased toward polar residues. Active-site residues include His204 and Cys260.

The protein belongs to the peptidase C14B family.

Its function is as follows. Involved in cell death (apoptosis). Required for the apoptotic-like loss of membrane phospholipid asymmetry at stationary phase and facilitates growth under conditions of endoplasmic reticulum stress. The protein is Metacaspase-1A (casA) of Aspergillus fumigatus (strain CBS 144.89 / FGSC A1163 / CEA10) (Neosartorya fumigata).